Here is a 207-residue protein sequence, read N- to C-terminus: Cytidylyl-2-hydroxypropylphosphonate hydrolase (207 aa).

The CDP site is built by Trp-68, Arg-74, Gln-76, and Ser-77. Positions 109, 125, 127, and 129 each coordinate a divalent metal cation. A CDP-binding site is contributed by Lys-142. Lys-142 functions as the Proton donor in the catalytic mechanism. Asp-143 serves as a coordination point for a divalent metal cation.

Belongs to the FomD family. Mn(2+) serves as cofactor. The cofactor is Co(2+).

It catalyses the reaction cytidine 5'-({hydroxy[(S)-2-hydroxypropyl]phosphonoyl}phosphate) + H2O = (S)-2-hydroxypropylphosphonate + CMP + H(+). It functions in the pathway antibiotic biosynthesis; fosfomycin biosynthesis. Its activity is regulated as follows. Hydrolysis of (S)-HPP-CMP is inhibited by CDP. In terms of biological role, involved in fosfomycin biosynthesis. Catalyzes the hydrolysis of cytidylyl (S)-2-hydroxypropylphosphonate ((S)-HPP-CMP) to give (S)-2-hydroxypropylphosphonate ((S)-HPP) and CMP. Can also hydrolyze (R)-HPP-CMP and cytidylyl 2-hydroxyethylphosphonate (HEP-CMP), which is a biosynthetic intermediate before C-methylation, but the catalytic efficiency is much higher with (S)-HPP-CMP. In Streptomyces fradiae (Streptomyces roseoflavus), this protein is Cytidylyl-2-hydroxypropylphosphonate hydrolase.